Consider the following 355-residue polypeptide: UPF0421 protein BALH_2468 (355 aa).

Transmembrane regions (helical) follow at residues 19 to 39 (IAVF…IFAV), 74 to 94 (FTFF…FTIV), 109 to 129 (TLTA…AFLI), and 131 to 151 (LATT…ILPP).

It belongs to the UPF0421 family.

It localises to the cell membrane. The polypeptide is UPF0421 protein BALH_2468 (Bacillus thuringiensis (strain Al Hakam)).